A 407-amino-acid polypeptide reads, in one-letter code: Peptidase T (407 aa).

Residue H78 coordinates Zn(2+). D80 is a catalytic residue. D139 is a Zn(2+) binding site. Catalysis depends on E173, which acts as the Proton acceptor. Residues E174, D196, and H378 each contribute to the Zn(2+) site.

The protein belongs to the peptidase M20B family. Requires Zn(2+) as cofactor.

The protein localises to the cytoplasm. It catalyses the reaction Release of the N-terminal residue from a tripeptide.. Functionally, cleaves the N-terminal amino acid of tripeptides. This chain is Peptidase T, found in Shewanella pealeana (strain ATCC 700345 / ANG-SQ1).